A 355-amino-acid chain; its full sequence is Dual-specificity RNA methyltransferase RlmN (355 aa).

Residue Glu86 is the Proton acceptor of the active site. Residues 105–338 (KEARYTVCVS…CTIRESKGLD (234 aa)) enclose the Radical SAM core domain. Cys112 and Cys343 are joined by a disulfide. 3 residues coordinate [4Fe-4S] cluster: Cys119, Cys123, and Cys126. Residues 169 to 170 (GE), Ser201, 224 to 226 (SLH), and Asn300 each bind S-adenosyl-L-methionine. The S-methylcysteine intermediate role is filled by Cys343.

It belongs to the radical SAM superfamily. RlmN family. It depends on [4Fe-4S] cluster as a cofactor.

Its subcellular location is the cytoplasm. It carries out the reaction adenosine(2503) in 23S rRNA + 2 reduced [2Fe-2S]-[ferredoxin] + 2 S-adenosyl-L-methionine = 2-methyladenosine(2503) in 23S rRNA + 5'-deoxyadenosine + L-methionine + 2 oxidized [2Fe-2S]-[ferredoxin] + S-adenosyl-L-homocysteine. The catalysed reaction is adenosine(37) in tRNA + 2 reduced [2Fe-2S]-[ferredoxin] + 2 S-adenosyl-L-methionine = 2-methyladenosine(37) in tRNA + 5'-deoxyadenosine + L-methionine + 2 oxidized [2Fe-2S]-[ferredoxin] + S-adenosyl-L-homocysteine. Its function is as follows. Specifically methylates position 2 of adenine 2503 in 23S rRNA and position 2 of adenine 37 in tRNAs. m2A2503 modification seems to play a crucial role in the proofreading step occurring at the peptidyl transferase center and thus would serve to optimize ribosomal fidelity. The chain is Dual-specificity RNA methyltransferase RlmN from Nitratiruptor sp. (strain SB155-2).